The sequence spans 2321 residues: Neurogenic locus notch homolog protein 3 (2321 aa).

Positions 1–14 (MGPGARGRRRRRRP) are enriched in basic residues. Positions 1-26 (MGPGARGRRRRRRPMSPPPPPPPVRA) are disordered. The N-terminal stretch at 1 to 39 (MGPGARGRRRRRRPMSPPPPPPPVRALPLLLLLAGPGAA) is a signal peptide. The span at 15–25 (MSPPPPPPPVR) shows a compositional bias: pro residues. EGF-like domains lie at 40-77 (APPCLDGSPCANGGRCTQLPSREAACLCPPGWVGERCQ), 78-118 (LEDP…PDCS), and 119-156 (LPDPCLSSPCAHGARCSVGPDGRFLCSCPPGYQGRSCR). The Extracellular segment spans residues 40–1643 (APPCLDGSPC…LEPPEPSVPL (1604 aa)). 99 disulfides stabilise this stretch: C43/C55, C49/C65, C67/C76, C82/C93, C87/C106, C108/C117, C123/C134, C128/C144, C146/C155, C162/C174, C168/C183, C185/C194, C201/C212, C206/C222, C224/C233, C240/C251, C245/C260, C262/C271, C278/C291, C285/C300, C302/C311, C318/C329, C323/C338, C340/C349, C355/C366, C360/C377, C379/C388, C395/C408, C402/C417, C419/C428, C435/C446, C440/C455, C457/C466, C473/C484, C478/C493, C495/C504, C511/C522, C516/C531, C533/C542, C549/C559, C554/C568, C570/C579, C586/C597, C591/C606, C608/C617, C624/C634, C629/C643, C645/C654, C661/C672, C666/C681, C683/C692, C699/C709, C704/C718, C720/C729, C738/C749, C743/C758, C760/C769, C775/C786, C780/C796, C798/C807, C814/C826, C820/C835, C837/C846, C853/C864, C858/C873, C875/C884, C891/C901, C896/C910, C912/C921, C928/C939, C933/C948, C950/C959, C966/C977, C971/C986, C988/C997, C1004/C1015, C1009/C1022, C1024/C1033, C1040/C1061, C1055/C1070, C1072/C1081, C1088/C1099, C1093/C1108, C1110/C1119, C1126/C1137, C1131/C1146, C1148/C1157, C1164/C1182, C1176/C1191, C1193/C1202, C1209/C1222, C1214/C1232, C1234/C1243, C1250/C1261, C1255/C1275, C1277/C1286, C1293/C1304, C1298/C1313, and C1315/C1324. Positions 158–195 (DVDECRVGEPCRHGGTCLNTPGSFRCQCPAGYTGPLCE) constitute an EGF-like 4; calcium-binding domain. An EGF-like 5 domain is found at 197–234 (PAVPCAPSPCRNGGTCRQSGDLTYDCACLPGFEGQNCE). In terms of domain architecture, EGF-like 6; calcium-binding spans 236–272 (NVDDCPGHRCLNGGTCVDGVNTYNCQCPPEWTGQFCT). An EGF-like 7 domain is found at 274 to 312 (DVDECQLQPNACHNGGTCFNTLGGHSCVCVNGWTGESCS). Residues 314–350 (NIDDCATAVCFHGATCHDRVASFYCACPMGKTGLLCH) form the EGF-like 8; calcium-binding domain. Residues 351–389 (LDDACVSNPCHEDAICDTNPVNGRAICTCPPGFTGGACD) enclose the EGF-like 9 domain. The region spanning 391-429 (DVDECSIGANPCEHLGRCVNTQGSFLCQCGRGYTGPRCE) is the EGF-like 10; calcium-binding domain. The region spanning 431–467 (DVNECLSGPCRNQATCLDRIGQFTCICMAGFTGTYCE) is the EGF-like 11; calcium-binding domain. The EGF-like 12; calcium-binding domain maps to 469–505 (DIDECQSSPCVNGGVCKDRVNGFSCTCPSGFSGSTCQ). Positions 507 to 543 (DVDECASTPCRNGAKCVDQPDGYECRCAEGFEGTLCD) constitute an EGF-like 13; calcium-binding domain. In terms of domain architecture, EGF-like 14; calcium-binding spans 545–580 (NVDDCSPDPCHHGRCVDGIASFSCACAPGYTGTRCE). The EGF-like 15; calcium-binding domain maps to 582-618 (QVDECRSQPCRHGGKCLDLVDKYLCRCPSGTTGVNCE). The EGF-like 16; calcium-binding domain maps to 620-655 (NIDDCASNPCTFGVCRDGINRYDCVCQPGFTGPLCN). The EGF-like 17; calcium-binding domain occupies 657–693 (EINECASSPCGEGGSCVDGENGFRCLCPPGSLPPLCL). EGF-like domains lie at 695-730 (PSHPCAHEPCSHGICYDAPGGFRCVCEPGWSGPRCS), 734-770 (ARDACESQPCRAGGTCSSDGMGFHCTCPPGVQGRQCE), and 771-808 (LLSPCTPNPCEHGGRCESAPGQLPVCSCPQGWQGPRCQ). One can recognise an EGF-like 21; calcium-binding domain in the interval 810–847 (DVDECAGPAPCGPHGICTNLAGSFSCTCHGGYTGPSCD). Positions 849–885 (DINDCDPNPCLNGGSCQDGVGSFSCSCLPGFAGPRCA) constitute an EGF-like 22; calcium-binding domain. Positions 887–922 (DVDECLSNPCGPGTCTDHVASFTCTCPPGYGGFHCE) constitute an EGF-like 23; calcium-binding domain. 5 EGF-like domains span residues 924–960 (DLPDCSPSSCFNGGTCVDGVNSFSCLCRPGYTGAHCQ), 962–998 (EADPCLSRPCLHGGVCSAAHPGFRCTCLESFTGPQCQ), 1000–1034 (LVDWCSRQPCQNGGRCVQTGAYCLCPPGWSGRLCD), 1036–1082 (RSLP…SHCE), and 1084–1120 (EVDPCLAQPCQHGGTCRGYMGGYMCECLPGYNGDNCE). Residues 1122–1158 (DVDECASQPCQHGGSCIDLVARYLCSCPPGTLGVLCE) enclose the EGF-like 29; calcium-binding domain. One can recognise an EGF-like 30; calcium-binding domain in the interval 1160-1203 (NEDDCGPGPPLDSGPRCLHNGTCVDLVGGFRCTCPPGYTGLRCE). N1179 is a glycosylation site (N-linked (GlcNAc...) asparagine). 4 EGF-like domains span residues 1205–1244 (DINECRSGACHAAHTRDCLQDPGGGFRCLCHAGFSGPRCQ), 1246–1287 (VLSP…PRCE), 1289–1325 (VARSCRELQCPVGVPCQQTPRGPRCACPPGLSGPSCR), and 1335–1373 (SNASCAAAPCLHGGSCRPAPLAPFFRCACAQGWTGPRCE). The N-linked (GlcNAc...) asparagine glycan is linked to N1336. 12 disulfides stabilise this stretch: C1339-C1350, C1344-C1361, C1363-C1372, C1387-C1410, C1392-C1405, C1401-C1417, C1428-C1451, C1433-C1446, C1442-C1458, C1467-C1493, C1475-C1488, and C1484-C1500. LNR repeat units follow at residues 1387-1427 (CPRA…PWRQ), 1428-1458 (CEALQCWRLFNNSRCDPACSSPACLYDNFDC), and 1467-1505 (CNPVYEKYCADHFADGRCDQGCNTEECGWDGLDCASEVP). Residue N1438 is glycosylated (N-linked (GlcNAc...) asparagine). Residues 1644–1664 (LPLLVAGAVLLLVILVLGVMV) traverse the membrane as a helical segment. At 1665 to 2321 (ARRKREHSTL…EVTPKRQVLA (657 aa)) the chain is on the cytoplasmic side. ANK repeat units lie at residues 1838–1867 (TGETALHLAARYARADAAKRLLDAGADTNA), 1871–1901 (SGRTPLHTAVTADAQGVFQILIRNRSTDLDA), 1905–1934 (DGSTALILAARLAVEGMVEELIASHADVNA), 1938–1967 (LGKSALHWAAAVNNVEATLALLKNGANKDM), and 1971–2000 (KEETPLFLAAREGSYEAAKLLLDHFANREI). A disordered region spans residues 2024 to 2120 (LDQPSGPRSP…FGGPPASPGG (97 aa)). Positions 2039–2053 (LGPLLCPPGAFLPGL) are enriched in low complexity. R2174 bears the Omega-N-methylarginine mark. The tract at residues 2190–2321 (APGPQLLNPG…EVTPKRQVLA (132 aa)) is disordered. A compositionally biased stretch (low complexity) spans 2269–2289 (STPSPATATGAMATTTGALPA). Positions 2296–2308 (VPSSLAQAQTQLG) are enriched in polar residues.

The protein belongs to the NOTCH family. As to quaternary structure, heterodimer of a C-terminal fragment N(TM) and a N-terminal fragment N(EC) which are probably linked by disulfide bonds. Interacts with MAML1, MAML2 and MAML3 which act as transcriptional coactivators for NOTCH3. Interacts with PSMA1. Interacts with HIF1AN. In terms of processing, synthesized in the endoplasmic reticulum as an inactive form which is proteolytically cleaved by a furin-like convertase in the trans-Golgi network before it reaches the plasma membrane to yield an active, ligand-accessible form. Cleavage results in a C-terminal fragment N(TM) and a N-terminal fragment N(EC). Following ligand binding, it is cleaved by TNF-alpha converting enzyme (TACE) to yield a membrane-associated intermediate fragment called notch extracellular truncation (NEXT). This fragment is then cleaved by presenilin dependent gamma-secretase to release a notch-derived peptide containing the intracellular domain (NICD) from the membrane. Phosphorylated. Post-translationally, hydroxylated by HIF1AN. In terms of tissue distribution, ubiquitously expressed in fetal and adult tissues.

The protein resides in the cell membrane. The protein localises to the nucleus. In terms of biological role, functions as a receptor for membrane-bound ligands Jagged1, Jagged2 and Delta1 to regulate cell-fate determination. Upon ligand activation through the released notch intracellular domain (NICD) it forms a transcriptional activator complex with RBPJ/RBPSUH and activates genes of the enhancer of split locus. Affects the implementation of differentiation, proliferation and apoptotic programs. This chain is Neurogenic locus notch homolog protein 3 (NOTCH3), found in Homo sapiens (Human).